Reading from the N-terminus, the 219-residue chain is Elongation factor Ts (219 aa).

The tract at residues 82 to 85 (TDFV) is involved in Mg(2+) ion dislocation from EF-Tu.

The protein belongs to the EF-Ts family.

It is found in the cytoplasm. Its function is as follows. Associates with the EF-Tu.GDP complex and induces the exchange of GDP to GTP. It remains bound to the aminoacyl-tRNA.EF-Tu.GTP complex up to the GTP hydrolysis stage on the ribosome. In Synechococcus sp. (strain CC9902), this protein is Elongation factor Ts.